Here is a 782-residue protein sequence, read N- to C-terminus: Ribosome biogenesis protein ERB1 (782 aa).

The span at 1–11 (MSVNSRKRKVA) shows a compositional bias: basic residues. The disordered stretch occupies residues 1–120 (MSVNSRKRKV…LEGEEDESLK (120 aa)). Acidic residues-rich tracts occupy residues 39–51 (DESE…EDTD) and 59–75 (LSDE…DEAE). Over residues 82–92 (RNLNTSGGSQQ) the composition is skewed to polar residues. The span at 106 to 117 (GADGELEGEEDE) shows a compositional bias: acidic residues. WD repeat units follow at residues 432-471 (GQEG…QVWN) and 475-516 (SDEE…PDVE). The segment at 533 to 556 (KPSTAANGEAPKQSPGKWSRPGSR) is disordered. WD repeat units lie at residues 612–652 (RLKG…KILQ), 653–692 (PGAK…KPYK), 696–736 (FHKE…DLME), and 752–782 (KSRL…RLWN).

Belongs to the WD repeat BOP1/ERB1 family. Component of the NOP7 complex, composed of ERB1, NOP7 and YTM1. The complex is held together by ERB1, which interacts with NOP7 via its N-terminal domain and with YTM1 via a high-affinity interaction between the seven-bladed beta-propeller domains of the 2 proteins. The NOP7 complex associates with the 66S pre-ribosome.

The protein localises to the nucleus. It is found in the nucleolus. The protein resides in the nucleoplasm. In terms of biological role, component of the NOP7 complex, which is required for maturation of the 25S and 5.8S ribosomal RNAs and formation of the 60S ribosome. The polypeptide is Ribosome biogenesis protein ERB1 (Phaeosphaeria nodorum (strain SN15 / ATCC MYA-4574 / FGSC 10173) (Glume blotch fungus)).